Here is a 475-residue protein sequence, read N- to C-terminus: GTPase Der (475 aa).

EngA-type G domains lie at 2 to 166 (LRIA…NIPE) and 213 to 386 (LKIA…ETVS). Residues 8–15 (GRPNVGKS), 55–59 (DTGGV), 118–121 (NKAD), 219–226 (GRPNVGKS), 266–270 (DTAGL), and 331–334 (NKWD) each bind GTP. A KH-like domain is found at 387–471 (RKVPTPVVNK…PFDLEIKEKA (85 aa)).

Belongs to the TRAFAC class TrmE-Era-EngA-EngB-Septin-like GTPase superfamily. EngA (Der) GTPase family. In terms of assembly, associates with the 50S ribosomal subunit.

Functionally, GTPase that plays an essential role in the late steps of ribosome biogenesis. The chain is GTPase Der from Chlamydia felis (strain Fe/C-56) (Chlamydophila felis).